A 145-amino-acid chain; its full sequence is uncharacterized protein (145 aa).

It belongs to the asfivirus K145R family.

It localises to the virion. This is an uncharacterized protein from Ornithodoros (relapsing fever ticks).